The chain runs to 358 residues: Acid phosphatase (358 aa).

A signal peptide spans 1-17 (MKFSTIALPLLASAALA). 3 N-linked (GlcNAc...) asparagine glycosylation sites follow: Asn20, Asn27, and Asn32. Residues 21-41 (SSHSGTNATSHNSTVPNENSK) are disordered. 3 residues coordinate Mg(2+): Asp49, Asp50, and Ser81. N-linked (GlcNAc...) asparagine glycosylation is found at Asn92 and Asn145. Mg(2+) is bound at residue Asn156. Ser189 is an active-site residue. Residues Asn199 and Asn278 are each glycosylated (N-linked (GlcNAc...) asparagine).

Belongs to the SurE nucleotidase family. Mg(2+) is required as a cofactor.

Its subcellular location is the secreted. The enzyme catalyses a phosphate monoester + H2O = an alcohol + phosphate. Functionally, probably serves to scavenge phosphorus for growing cells. The polypeptide is Acid phosphatase (PHO2) (Yarrowia lipolytica (strain CLIB 122 / E 150) (Yeast)).